A 467-amino-acid polypeptide reads, in one-letter code: Ethanolamine-phosphate phospho-lyase homolog 1 (467 aa).

Lys307 carries the post-translational modification N6-(pyridoxal phosphate)lysine.

It belongs to the class-III pyridoxal-phosphate-dependent aminotransferase family. The cofactor is pyridoxal 5'-phosphate.

This is Ethanolamine-phosphate phospho-lyase homolog 1 from Caenorhabditis elegans.